A 360-amino-acid chain; its full sequence is UDP-N-acetylglucosamine--N-acetylmuramyl-(pentapeptide) pyrophosphoryl-undecaprenol N-acetylglucosamine transferase (360 aa).

Ser198 and Gln289 together coordinate UDP-N-acetyl-alpha-D-glucosamine.

This sequence belongs to the glycosyltransferase 28 family. MurG subfamily.

Its subcellular location is the cell membrane. The enzyme catalyses Mur2Ac(oyl-L-Ala-gamma-D-Glu-L-Lys-D-Ala-D-Ala)-di-trans,octa-cis-undecaprenyl diphosphate + UDP-N-acetyl-alpha-D-glucosamine = beta-D-GlcNAc-(1-&gt;4)-Mur2Ac(oyl-L-Ala-gamma-D-Glu-L-Lys-D-Ala-D-Ala)-di-trans,octa-cis-undecaprenyl diphosphate + UDP + H(+). It functions in the pathway cell wall biogenesis; peptidoglycan biosynthesis. Its function is as follows. Cell wall formation. Catalyzes the transfer of a GlcNAc subunit on undecaprenyl-pyrophosphoryl-MurNAc-pentapeptide (lipid intermediate I) to form undecaprenyl-pyrophosphoryl-MurNAc-(pentapeptide)GlcNAc (lipid intermediate II). This Streptococcus pyogenes serotype M4 (strain MGAS10750) protein is UDP-N-acetylglucosamine--N-acetylmuramyl-(pentapeptide) pyrophosphoryl-undecaprenol N-acetylglucosamine transferase.